We begin with the raw amino-acid sequence, 45 residues long: Thymosin beta (45 aa).

The tract at residues methionine 1–proline 45 is disordered. Basic and acidic residues-rich tracts occupy residues serine 12–glutamate 25 and glutamate 33–proline 45.

It belongs to the thymosin beta family.

It localises to the cytoplasm. The protein resides in the cytoskeleton. Functionally, plays an important role in the organization of the cytoskeleton. Binds to and sequesters actin monomers (G actin) and therefore inhibits actin polymerization. This Danio rerio (Zebrafish) protein is Thymosin beta (tmsb).